Here is a 342-residue protein sequence, read N- to C-terminus: Heat-inducible transcription repressor HrcA (342 aa).

This sequence belongs to the HrcA family.

Functionally, negative regulator of class I heat shock genes (grpE-dnaK-dnaJ and groELS operons). Prevents heat-shock induction of these operons. This chain is Heat-inducible transcription repressor HrcA, found in Corynebacterium efficiens (strain DSM 44549 / YS-314 / AJ 12310 / JCM 11189 / NBRC 100395).